Here is a 481-residue protein sequence, read N- to C-terminus: 1-acylglycerol-3-phosphate O-acyltransferase PNPLA3 (481 aa).

Topologically, residues 1–41 (MYDAERGWSLSFAGCGFLGFYHVGATRCLSEHAPHLLRDAR) are cytoplasmic. The 170-residue stretch at 10–179 (LSFAGCGFLG…SDNVPFIDAK (170 aa)) folds into the PNPLA domain. The GXGXXG signature appears at 14–19 (GCGFLG). The chain crosses the membrane as a helical; Signal-anchor for type II membrane protein span at residues 42-62 (MLFGASAGALHCVGVLSGIPL). Positions 45-49 (GASAG) match the GXSXG motif. Ser47 (nucleophile) is an active-site residue. At 63 to 481 (EQTLQVLSDL…FPSFSLEKSL (419 aa)) the chain is on the lumenal side. A glycan (N-linked (GlcNAc...) asparagine) is linked at Asn89. The active-site Proton acceptor is the Asp166. The short motif at 166 to 168 (DGG) is the DGA/G element. N-linked (GlcNAc...) asparagine glycosylation is present at Asn280.

The protein resides in the membrane. It is found in the lipid droplet. It catalyses the reaction a 1-acyl-sn-glycero-3-phosphate + an acyl-CoA = a 1,2-diacyl-sn-glycero-3-phosphate + CoA. It carries out the reaction a triacylglycerol + H2O = a diacylglycerol + a fatty acid + H(+). The enzyme catalyses a 1-acylglycerol + a 1,3-diacylglycerol = a triacylglycerol + glycerol. The catalysed reaction is a 1-acylglycerol + a 1,2-diacylglycerol = a triacylglycerol + glycerol. It catalyses the reaction 2 a 1-acylglycerol = a 1,2-diacylglycerol + glycerol. It carries out the reaction 1-(9Z-octadecenoyl)-sn-glycero-3-phosphate + (9Z)-octadecenoyl-CoA = 1,2-di-(9Z-octadecenoyl)-sn-glycero-3-phosphate + CoA. The enzyme catalyses 1-(9Z-octadecenoyl)-sn-glycero-3-phosphate + hexadecanoyl-CoA = 1-(9Z)-octadecenoyl-2-hexadecanoyl-sn-glycero-3-phosphate + CoA. The catalysed reaction is 1-(9Z-octadecenoyl)-sn-glycero-3-phosphate + (9Z,12Z)-octadecadienoyl-CoA = 1-(9Z)-octadecenoyl-2-(9Z,12Z)-octadecadienoyl-sn-glycero-3-phosphate + CoA. It catalyses the reaction 1-(9Z-octadecenoyl)-sn-glycero-3-phosphate + (5Z,8Z,11Z,14Z)-eicosatetraenoyl-CoA = 1-(9Z)-octadecenoyl-2-(5Z,8Z,11Z,14Z)-eicosatetraenoyl-sn-glycero-3-phosphate + CoA. It carries out the reaction 2 1-(9Z-octadecenoyl)-glycerol = 1,2-di-(9Z-octadecenoyl)-glycerol + glycerol. The enzyme catalyses 1-(9Z-octadecenoyl)-glycerol + 1,2-di-(9Z-octadecenoyl)-glycerol = 1,2,3-tri-(9Z-octadecenoyl)-glycerol + glycerol. The catalysed reaction is 1-(9Z-octadecenoyl)-glycerol + 1,3-di-(9Z-octadecenoyl)-glycerol = 1,2,3-tri-(9Z-octadecenoyl)-glycerol + glycerol. It catalyses the reaction 1,2,3-tri-(9Z-octadecenoyl)-glycerol + H2O = 1,3-di-(9Z-octadecenoyl)-glycerol + (9Z)-octadecenoate + H(+). It carries out the reaction a 1,2-diacyl-sn-glycero-3-phosphocholine + H2O = a 1-acyl-sn-glycero-3-phosphocholine + a fatty acid + H(+). Its pathway is phospholipid metabolism. The protein operates within glycerolipid metabolism. Its activity is regulated as follows. The triglyceride lipase activity is inhibited by BEL ((E)-6-(bromomethylene)-3-(1-naphthalenyl)-2H-tetrahydropyran-2-one), a suicide substrate inhibitor. Its function is as follows. Specifically catalyzes coenzyme A (CoA)-dependent acylation of 1-acyl-sn-glycerol 3-phosphate (2-lysophosphatidic acid/LPA) to generate phosphatidic acid (PA), an important metabolic intermediate and precursor for both triglycerides and glycerophospholipids. Does not esterify other lysophospholipids. Acyl donors are long chain (at least C16) fatty acyl-CoAs: arachidonoyl-CoA, linoleoyl-CoA, oleoyl-CoA and at a lesser extent palmitoyl-CoA. Additionally possesses low triacylglycerol lipase and CoA-independent acylglycerol transacylase activities and thus may play a role in acyl-chain remodeling of triglycerides. In vitro may express hydrolytic activity against glycerolipids triacylglycerol, diacylglycerol and monoacylglycerol, with a strong preference for oleic acid as the acyl moiety. However, the triacylglycerol hydrolase activity is controversial and may be very low. Possesses phospholipase A2 activity. The polypeptide is 1-acylglycerol-3-phosphate O-acyltransferase PNPLA3 (Homo sapiens (Human)).